A 188-amino-acid chain; its full sequence is MDVNIAPLRAWDDFFPGSDRFARPDFRDISKWNNRVVSNLLYYQTNYLVVAAMMISVVGFLSPFNMILGGIVVVLVFTGFVWAAHNKDILRRMKKQYPTAFVMVVMLASYFLISLFGGVMVFVFGITFPLLLMFIHASLRLRNLKNKLENKMEEIGLKRTPMGIVLDALEQQEETITKFSDYISKMKE.

Met-1 bears the N-acetylmethionine mark. Residues 1–35 (MDVNIAPLRAWDDFFPGSDRFARPDFRDISKWNNR) are Cytoplasmic-facing. The next 2 helical transmembrane spans lie at 36–56 (VVSN…MMIS) and 57–77 (VVGF…VLVF). The Cytoplasmic segment spans residues 78 to 93 (TGFVWAAHNKDILRRM). A run of 2 helical transmembrane segments spans residues 94–114 (KKQY…FLIS) and 115–135 (LFGG…LMFI). Residues 103-117 (MVVMLASYFLISLFG) form a required for homodimer formation and heterodimer formation with ARL6IP1 region. The Cytoplasmic segment spans residues 136–188 (HASLRLRNLKNKLENKMEEIGLKRTPMGIVLDALEQQEETITKFSDYISKMKE). Residues 136 to 188 (HASLRLRNLKNKLENKMEEIGLKRTPMGIVLDALEQQEETITKFSDYISKMKE) are targeting to endoplasmic reticulum membrane.

Belongs to the PRA1 family. As to quaternary structure, homodimer. Heterodimer with ARL6IP1. Forms multimers. Interacts with ARL6. Interacts with prenylated RAB1A and RAB3A. Interacts with SLC1A1/EAAC1. Interacts with RTN2 (via first transmembrane domain). Does not interact with VAMP1, VAMP2 or VAMP3.

Its subcellular location is the endoplasmic reticulum membrane. It is found in the cell membrane. The protein localises to the cytoplasm. It localises to the cytoskeleton. Functionally, regulates intracellular concentrations of taurine and glutamate. Negatively modulates SLC1A1/EAAC1 glutamate transport activity by decreasing its affinity for glutamate in a PKC activity-dependent manner. Plays a role in the retention of SLC1A1/EAAC1 in the endoplasmic reticulum. The protein is PRA1 family protein 3 (ARL6IP5) of Bos taurus (Bovine).